A 352-amino-acid polypeptide reads, in one-letter code: SKP1-like protein 20 (352 aa).

Residues 108–167 (TSAADSLQLKPLVDLTSRALARIIEGKNPEEIREIFHLPDDLTEEEKLEPLKNSMDDPRI) are interaction with the F-box domain of F-box proteins. Disordered stretches follow at residues 214–251 (KAVK…RSKQ) and 267–288 (LLSA…DIDD). The span at 216–230 (VKMSKGKKKKKKKKD) shows a compositional bias: basic residues. Over residues 239 to 249 (IHDKESHDLRS) the composition is skewed to basic and acidic residues.

Belongs to the SKP1 family. In terms of assembly, part of a SCF (SKP1-cullin-F-box) protein ligase complex. Expressed in young seedlings, roots, leaves, floral stems, inflorescences, and siliques.

It localises to the nucleus. It participates in protein modification; protein ubiquitination. Involved in ubiquitination and subsequent proteasomal degradation of target proteins. Together with CUL1, RBX1 and a F-box protein, it forms a SCF E3 ubiquitin ligase complex. The functional specificity of this complex depends on the type of F-box protein. In the SCF complex, it serves as an adapter that links the F-box protein to CUL1. In Arabidopsis thaliana (Mouse-ear cress), this protein is SKP1-like protein 20 (ASK20).